A 263-amino-acid chain; its full sequence is Small ribosomal subunit protein uS2 (263 aa).

A compositionally biased stretch (basic and acidic residues) spans 230 to 249; it reads GEALVNEEKEITDEEKKEVL. The interval 230–263 is disordered; sequence GEALVNEEKEITDEEKKEVLDEAMSEEDFGEEQE. Acidic residues predominate over residues 250-263; that stretch reads DEAMSEEDFGEEQE.

This sequence belongs to the universal ribosomal protein uS2 family.

This chain is Small ribosomal subunit protein uS2, found in Campylobacter jejuni subsp. jejuni serotype O:2 (strain ATCC 700819 / NCTC 11168).